Consider the following 876-residue polypeptide: Alanine--tRNA ligase (876 aa).

Zn(2+) contacts are provided by histidine 565, histidine 569, cysteine 667, and histidine 671.

The protein belongs to the class-II aminoacyl-tRNA synthetase family. Requires Zn(2+) as cofactor.

It is found in the cytoplasm. It carries out the reaction tRNA(Ala) + L-alanine + ATP = L-alanyl-tRNA(Ala) + AMP + diphosphate. In terms of biological role, catalyzes the attachment of alanine to tRNA(Ala) in a two-step reaction: alanine is first activated by ATP to form Ala-AMP and then transferred to the acceptor end of tRNA(Ala). Also edits incorrectly charged Ser-tRNA(Ala) and Gly-tRNA(Ala) via its editing domain. The sequence is that of Alanine--tRNA ligase from Staphylococcus aureus (strain Mu3 / ATCC 700698).